A 517-amino-acid chain; its full sequence is ATP synthase subunit beta (517 aa).

Residue 167 to 174 (GGAGVGKT) participates in ATP binding. Composition is skewed to basic and acidic residues over residues 475–484 (AESMGAKMDD) and 495–508 (DSKD…KADD). Residues 475-517 (AESMGAKMDDGGSDGAPPPSDSKDKGKGDSKADDKGDDADKDA) form a disordered region.

It belongs to the ATPase alpha/beta chains family. As to quaternary structure, F-type ATPases have 2 components, CF(1) - the catalytic core - and CF(0) - the membrane proton channel. CF(1) has five subunits: alpha(3), beta(3), gamma(1), delta(1), epsilon(1). CF(0) has three main subunits: a(1), b(2) and c(9-12). The alpha and beta chains form an alternating ring which encloses part of the gamma chain. CF(1) is attached to CF(0) by a central stalk formed by the gamma and epsilon chains, while a peripheral stalk is formed by the delta and b chains.

It localises to the cell membrane. The catalysed reaction is ATP + H2O + 4 H(+)(in) = ADP + phosphate + 5 H(+)(out). Its function is as follows. Produces ATP from ADP in the presence of a proton gradient across the membrane. The catalytic sites are hosted primarily by the beta subunits. The protein is ATP synthase subunit beta of Mycobacterium sp. (strain JLS).